The primary structure comprises 442 residues: Endothelin receptor type B (442 aa).

The first 26 residues, 1–26 (MQSSASRCGRALVALLLACGLLGVWG), serve as a signal peptide directing secretion. At 27–101 (EKRGFPPAQA…RKIEINKTFK (75 aa)) the chain is on the extracellular side. N-linked (GlcNAc...) asparagine glycans are attached at residues asparagine 60 and asparagine 97. A helical membrane pass occupies residues 102–126 (YINTIVSCLVFVLGIIGNSTLLRII). The Cytoplasmic segment spans residues 127-137 (YKNKCMRNGPN). The helical transmembrane segment at 138–163 (ILIASLALGDLLHIIIDIPINAYKLL) threads the bilayer. Residues 164-175 (AGDWPFGAEMCK) are Extracellular-facing. Cysteine 174 and cysteine 255 are disulfide-bonded. The chain crosses the membrane as a helical span at residues 176–197 (LVPFIQKASVGITVLSLCALSI). Over 198–218 (DRYRAVASWSRIKGIGVPKWT) the chain is Cytoplasmic. The chain crosses the membrane as a helical span at residues 219–243 (AVEIVLIWVVSVVLAVPEAIGFDVI). Topologically, residues 244–271 (TSDYKGKPLRVCMLNPFQKTAFMQFYKT) are extracellular. The chain crosses the membrane as a helical span at residues 272-296 (AKDWWLFSFYFCLPLAITAIFYTLM). The Cytoplasmic segment spans residues 297–324 (TCEMLRKKSGMQIALNDHLKQRREVAKT). At serine 305 the chain carries Phosphoserine. A helical transmembrane segment spans residues 325–350 (VFCLVLVFALCWLPLHLSRILKLTLY). The Extracellular segment spans residues 351–362 (DQSNPQRCELLS). The helical transmembrane segment at 363 to 389 (FLLVLDYIGINMASLNSCINPIALYLV) threads the bilayer. Residues 390–442 (SKRFKNCFKSCLCCWCQTFEEKQSLEEKQSCLKFKANDHGYDNFRSSNKYSSS) are Cytoplasmic-facing. Residues cysteine 402, cysteine 403, and cysteine 405 are each lipidated (S-palmitoyl cysteine). A Phosphoserine modification is found at serine 419. Tyrosine 439 is modified (phosphotyrosine). Phosphoserine occurs at positions 440, 441, and 442.

It belongs to the G-protein coupled receptor 1 family. Endothelin receptor subfamily. EDNRB sub-subfamily. As to expression, widely distributed in cell types of a variety of tissues.

It is found in the cell membrane. In terms of biological role, non-specific receptor for endothelin 1, 2, and 3. Mediates its action by association with G proteins that activate a phosphatidylinositol-calcium second messenger system. This Rattus norvegicus (Rat) protein is Endothelin receptor type B.